Consider the following 331-residue polypeptide: DNA-directed RNA polymerase subunit alpha (331 aa).

Positions 1 to 235 (MTMHIRWRGM…KHLNPFVQYR (235 aa)) are alpha N-terminal domain (alpha-NTD). The interval 255–331 (QLEAKLNMTL…GMRVPNQPLF (77 aa)) is alpha C-terminal domain (alpha-CTD).

The protein belongs to the RNA polymerase alpha chain family. As to quaternary structure, homodimer. The RNAP catalytic core consists of 2 alpha, 1 beta, 1 beta' and 1 omega subunit. When a sigma factor is associated with the core the holoenzyme is formed, which can initiate transcription.

The catalysed reaction is RNA(n) + a ribonucleoside 5'-triphosphate = RNA(n+1) + diphosphate. Functionally, DNA-dependent RNA polymerase catalyzes the transcription of DNA into RNA using the four ribonucleoside triphosphates as substrates. This Rhodopirellula baltica (strain DSM 10527 / NCIMB 13988 / SH1) protein is DNA-directed RNA polymerase subunit alpha.